The chain runs to 436 residues: Xylose isomerase (436 aa).

Residues H100 and D103 contribute to the active site. Positions 231, 267, 270, 295, 306, 308, and 338 each coordinate Mg(2+).

The protein belongs to the xylose isomerase family. Homotetramer. The cofactor is Mg(2+).

It localises to the cytoplasm. It carries out the reaction alpha-D-xylose = alpha-D-xylulofuranose. This Ruegeria sp. (strain TM1040) (Silicibacter sp.) protein is Xylose isomerase.